The primary structure comprises 310 residues: Transcription initiation factor IIA subunit 1 (310 aa).

Disordered stretches follow at residues 52–78 (AISN…LSTV), 91–197 (IQLN…NNKD), and 218–261 (VIPQ…DDPD). Low complexity-rich tracts occupy residues 62–77 (TTAT…TLST) and 122–160 (SNGT…PSSL). Composition is skewed to acidic residues over residues 173-183 (TLDESDNDDDN), 225-236 (LNDDDDLDDEEI), and 246-261 (DSLG…DDPD).

The protein belongs to the TFIIA subunit 1 family. In terms of assembly, TFIIA is a heterodimer of the large subunit 1 and a small subunit gamma.

Its subcellular location is the nucleus. In terms of biological role, TFIIA is a component of the transcription machinery of RNA polymerase II and plays an important role in transcriptional activation. TFIIA in a complex with tbp mediates transcriptional activity. In Dictyostelium discoideum (Social amoeba), this protein is Transcription initiation factor IIA subunit 1 (gtf2a1).